A 377-amino-acid chain; its full sequence is NADH dehydrogenase [ubiquinone] 1 alpha subcomplex subunit 9, mitochondrial (377 aa).

Residues 1–35 (MAAAAQSRVVRVLSMSRSAITAIATSVCHGPPCRQ) constitute a mitochondrion transit peptide. Lys175 is subject to N6-succinyllysine. 2 positions are modified to N6-acetyllysine: Lys189 and Lys370.

The protein belongs to the complex I NDUFA9 subunit family. As to quaternary structure, complex I is composed of 45 different subunits. This a component of the hydrophobic protein fraction. Interacts with BLOC1S1. Interacts with SLC2A4. Interacts with CLOCK. Interacts with RAB5IF. The cofactor is FAD. Acetylated on lysine residues. BLOC1S1 is required for acetylation. Acetylated by CLOCK in a circadian manner.

The protein localises to the mitochondrion matrix. Functionally, accessory subunit of the mitochondrial membrane respiratory chain NADH dehydrogenase (Complex I), that is believed not to be involved in catalysis. Required for proper complex I assembly. Complex I functions in the transfer of electrons from NADH to the respiratory chain. The immediate electron acceptor for the enzyme is believed to be ubiquinone. This chain is NADH dehydrogenase [ubiquinone] 1 alpha subcomplex subunit 9, mitochondrial (NDUFA9), found in Homo sapiens (Human).